Consider the following 217-residue polypeptide: MELTQHEARVIGVLLEKELTTPEQYPLSLNSLTSGCNQKTSREPVLNLSESEVQNTLDSLAKKRLISEQSGFGSRVVKYKHRFCNTEFSDLQLNPAQLATICLLLLRGPQTPGELRTRSNRLHEFNDVREVEHALDELARRDSPLVALLAKQPGKREARYCQLFTTEELELTTNPILHKDAEPQTSSRAELEDRVSKLEVEVGELKALIQQFQNKSQ.

It belongs to the UPF0502 family.

The polypeptide is UPF0502 protein swp_3027 (Shewanella piezotolerans (strain WP3 / JCM 13877)).